The sequence spans 588 residues: Peptidoglycan D,D-transpeptidase FtsI (588 aa).

The helical transmembrane segment at 19–39 threads the bilayer; that stretch reads FISWRFALLCGCILLALAFLL. Ser-307 functions as the Acyl-ester intermediate in the catalytic mechanism. Positions 578 to 588 are excised as a propeptide; the sequence is INQGEGTGGRS.

The protein belongs to the transpeptidase family. FtsI subfamily.

Its subcellular location is the cell inner membrane. It carries out the reaction Preferential cleavage: (Ac)2-L-Lys-D-Ala-|-D-Ala. Also transpeptidation of peptidyl-alanyl moieties that are N-acyl substituents of D-alanine.. It participates in cell wall biogenesis; peptidoglycan biosynthesis. Catalyzes cross-linking of the peptidoglycan cell wall at the division septum. This is Peptidoglycan D,D-transpeptidase FtsI from Escherichia coli O157:H7.